We begin with the raw amino-acid sequence, 516 residues long: Acetylcholine receptor subunit delta (516 aa).

Residues 1-21 form the signal peptide; that stretch reads MEGSVLTLVLLAALVVCGSWG. Over 22 to 244 the chain is Extracellular; it reads LNEEERLIRH…VTFYLIIRRK (223 aa). N96 and N163 each carry an N-linked (GlcNAc...) asparagine glycan. C150 and C164 form a disulfide bridge. 3 helical membrane passes run 245–269, 279–296, and 311–332; these read PLFY…VFYL, MAIS…LISK, and FLLF…VLNI. The Cytoplasmic portion of the chain corresponds to 333–470; the sequence is HFRTPSTHVL…WNRVARTVDR (138 aa). Y389 bears the Phosphotyrosine; by Tyr-kinases mark. A helical membrane pass occupies residues 471-493; that stretch reads LCLFVVTPIMVVGTAWIFLQGAY.

The protein belongs to the ligand-gated ion channel (TC 1.A.9) family. Acetylcholine receptor (TC 1.A.9.1) subfamily. Delta/CHRND sub-subfamily. In terms of assembly, pentamer of two alpha chains, and one each of the beta, delta, and gamma (in immature muscle) or epsilon (in mature muscle) chains. The muscle heteropentamer composed of alpha-1, beta-1, delta, epsilon subunits interacts with the alpha-conotoxin ImII.

The protein localises to the postsynaptic cell membrane. It localises to the cell membrane. The catalysed reaction is K(+)(in) = K(+)(out). It catalyses the reaction Na(+)(in) = Na(+)(out). In terms of biological role, after binding acetylcholine, the AChR responds by an extensive change in conformation that affects all subunits and leads to opening of an ion-conducting channel across the plasma membrane. This Bos taurus (Bovine) protein is Acetylcholine receptor subunit delta (CHRND).